The chain runs to 339 residues: Glycerol-3-phosphate dehydrogenase [NAD(P)+] (339 aa).

The NADPH site is built by serine 15, tyrosine 16, histidine 36, and lysine 110. 3 residues coordinate sn-glycerol 3-phosphate: lysine 110, glycine 139, and threonine 141. Alanine 143 lines the NADPH pocket. Sn-glycerol 3-phosphate contacts are provided by lysine 195, aspartate 248, serine 258, arginine 259, and asparagine 260. The active-site Proton acceptor is lysine 195. Arginine 259 lines the NADPH pocket. Residues valine 283 and glutamate 285 each contribute to the NADPH site.

It belongs to the NAD-dependent glycerol-3-phosphate dehydrogenase family.

It localises to the cytoplasm. The catalysed reaction is sn-glycerol 3-phosphate + NAD(+) = dihydroxyacetone phosphate + NADH + H(+). It catalyses the reaction sn-glycerol 3-phosphate + NADP(+) = dihydroxyacetone phosphate + NADPH + H(+). It functions in the pathway membrane lipid metabolism; glycerophospholipid metabolism. Functionally, catalyzes the reduction of the glycolytic intermediate dihydroxyacetone phosphate (DHAP) to sn-glycerol 3-phosphate (G3P), the key precursor for phospholipid synthesis. The polypeptide is Glycerol-3-phosphate dehydrogenase [NAD(P)+] (Pectobacterium carotovorum subsp. carotovorum (strain PC1)).